The following is a 293-amino-acid chain: Lysosomal amino acid transporter 1 homolog (293 aa).

Over 1–37 (MVWRTLGASNFSTCPNGSVQWIWDVFGECAQDGWDEA) the chain is Lumenal. Asn10 and Asn16 each carry an N-linked (GlcNAc...) asparagine glycan. The region spanning 34 to 100 (WDEASVGLGL…LADQLPLQTY (67 aa)) is the PQ-loop 1 domain. A helical membrane pass occupies residues 38-58 (SVGLGLVSILCFAASTFPQYI). The Cytoplasmic segment spans residues 59-71 (KACKTGNMDQALS). Residues 72–92 (LWFLLGWIGGDSCNLIGSFLA) form a helical membrane-spanning segment. The Lumenal portion of the chain corresponds to 93–96 (DQLP). The helical transmembrane segment at 97-117 (LQTYTAVYYVLADLMMLTLYF) threads the bilayer. The Cytoplasmic portion of the chain corresponds to 118–127 (HYKFKKRPSP). Residues 128 to 148 (LSAPINSVLLFILGTVCITPL) traverse the membrane as a helical segment. Topologically, residues 149 to 182 (LSSTDPVAVPREGFRGRTLLSVEPGNKPFTKKEV) are lumenal. Residues 183 to 203 (IGFVIGSASSLLYLLSRLPQI) traverse the membrane as a helical segment. The PQ-loop 2 domain occupies 191-243 (SSLLYLLSRLPQIRTNFIRQSTQGISYSLFALVMLGNTLYGLSVLLKNPEVGQ). Residues 204–214 (RTNFIRQSTQG) are Cytoplasmic-facing. A helical membrane pass occupies residues 215–235 (ISYSLFALVMLGNTLYGLSVL). The Lumenal segment spans residues 236–254 (LKNPEVGQSEGSYLLHHLP). The helical transmembrane segment at 255 to 275 (WLVGSLGVLLLDTIISIQFLV) threads the bilayer. The Cytoplasmic segment spans residues 276–293 (YRSHETAAASEREPLLPS). Residues 290 to 291 (LL) carry the Di-leucine motif motif.

The protein belongs to the laat-1 family. Ubiquitously expressed.

It is found in the lysosome membrane. In terms of biological role, amino acid transporter that specifically mediates the pH-dependent export of the cationic amino acids arginine, histidine and lysine from lysosomes. This is Lysosomal amino acid transporter 1 homolog from Mus musculus (Mouse).